Here is a 229-residue protein sequence, read N- to C-terminus: Putative N-acetylmannosamine-6-phosphate 2-epimerase (229 aa).

The protein belongs to the NanE family.

The catalysed reaction is an N-acyl-D-glucosamine 6-phosphate = an N-acyl-D-mannosamine 6-phosphate. It participates in amino-sugar metabolism; N-acetylneuraminate degradation; D-fructose 6-phosphate from N-acetylneuraminate: step 3/5. Functionally, converts N-acetylmannosamine-6-phosphate (ManNAc-6-P) to N-acetylglucosamine-6-phosphate (GlcNAc-6-P). This Shigella flexneri serotype 5b (strain 8401) protein is Putative N-acetylmannosamine-6-phosphate 2-epimerase.